A 129-amino-acid polypeptide reads, in one-letter code: Glycine cleavage system H protein (129 aa).

The region spanning 24-106 (SYTVGISEHA…FGDGWFFRVM (83 aa)) is the Lipoyl-binding domain. Position 65 is an N6-lipoyllysine (Lys65).

This sequence belongs to the GcvH family. As to quaternary structure, the glycine cleavage system is composed of four proteins: P, T, L and H. (R)-lipoate is required as a cofactor.

Its function is as follows. The glycine cleavage system catalyzes the degradation of glycine. The H protein shuttles the methylamine group of glycine from the P protein to the T protein. This is Glycine cleavage system H protein from Shewanella woodyi (strain ATCC 51908 / MS32).